A 187-amino-acid polypeptide reads, in one-letter code: UPF0398 protein SH1465 (187 aa).

It belongs to the UPF0398 family.

The sequence is that of UPF0398 protein SH1465 from Staphylococcus haemolyticus (strain JCSC1435).